We begin with the raw amino-acid sequence, 342 residues long: 4-hydroxythreonine-4-phosphate dehydrogenase (342 aa).

Residues His-140 and Thr-141 each coordinate substrate. 3 residues coordinate a divalent metal cation: His-175, His-220, and His-275. The substrate site is built by Lys-283, Asn-292, and Arg-301.

The protein belongs to the PdxA family. As to quaternary structure, homodimer. Zn(2+) serves as cofactor. It depends on Mg(2+) as a cofactor. Co(2+) is required as a cofactor.

The protein resides in the cytoplasm. It catalyses the reaction 4-(phosphooxy)-L-threonine + NAD(+) = 3-amino-2-oxopropyl phosphate + CO2 + NADH. It functions in the pathway cofactor biosynthesis; pyridoxine 5'-phosphate biosynthesis; pyridoxine 5'-phosphate from D-erythrose 4-phosphate: step 4/5. In terms of biological role, catalyzes the NAD(P)-dependent oxidation of 4-(phosphooxy)-L-threonine (HTP) into 2-amino-3-oxo-4-(phosphooxy)butyric acid which spontaneously decarboxylates to form 3-amino-2-oxopropyl phosphate (AHAP). The sequence is that of 4-hydroxythreonine-4-phosphate dehydrogenase from Rhizobium meliloti (strain 1021) (Ensifer meliloti).